Reading from the N-terminus, the 236-residue chain is UPF0177 protein YaiH (236 aa).

The next 6 helical transmembrane spans lie at 16–36 (YFSL…ILGY), 51–71 (ATAT…GILI), 90–110 (ILFL…TFTY), 131–151 (IVFP…FEEA), 180–200 (TGAN…TLIY), and 210–230 (ILVH…LQTI).

The protein belongs to the UPF0177 family.

Its subcellular location is the cell membrane. This chain is UPF0177 protein YaiH (yaiH), found in Lactococcus lactis subsp. lactis (strain IL1403) (Streptococcus lactis).